The primary structure comprises 102 residues: Small ribosomal subunit protein uS10 (102 aa).

Belongs to the universal ribosomal protein uS10 family. Part of the 30S ribosomal subunit.

Its function is as follows. Involved in the binding of tRNA to the ribosomes. The polypeptide is Small ribosomal subunit protein uS10 (Lactiplantibacillus plantarum (strain ATCC BAA-793 / NCIMB 8826 / WCFS1) (Lactobacillus plantarum)).